A 291-amino-acid chain; its full sequence is N-acetylmannosamine kinase (291 aa).

ATP-binding positions include 5–12 (AIDIGGTK) and 132–139 (GVGGGVVS). Positions 156, 166, 168, and 173 each coordinate Zn(2+).

This sequence belongs to the ROK (NagC/XylR) family. NanK subfamily. As to quaternary structure, homodimer.

It catalyses the reaction an N-acyl-D-mannosamine + ATP = an N-acyl-D-mannosamine 6-phosphate + ADP + H(+). It functions in the pathway amino-sugar metabolism; N-acetylneuraminate degradation; D-fructose 6-phosphate from N-acetylneuraminate: step 2/5. Its function is as follows. Catalyzes the phosphorylation of N-acetylmannosamine (ManNAc) to ManNAc-6-P. This Shigella flexneri serotype 5b (strain 8401) protein is N-acetylmannosamine kinase.